The primary structure comprises 298 residues: ATP synthase gamma chain (298 aa).

The protein belongs to the ATPase gamma chain family. As to quaternary structure, F-type ATPases have 2 components, CF(1) - the catalytic core - and CF(0) - the membrane proton channel. CF(1) has five subunits: alpha(3), beta(3), gamma(1), delta(1), epsilon(1). CF(0) has three main subunits: a, b and c.

Its subcellular location is the cell inner membrane. Its function is as follows. Produces ATP from ADP in the presence of a proton gradient across the membrane. The gamma chain is believed to be important in regulating ATPase activity and the flow of protons through the CF(0) complex. The chain is ATP synthase gamma chain from Acidithiobacillus ferridurans.